The chain runs to 274 residues: Rhamnulose-1-phosphate aldolase (274 aa).

Glu117 is an active-site residue. Residues His141, His143, and His212 each coordinate Zn(2+).

This sequence belongs to the aldolase class II family. RhaD subfamily. Homotetramer. It depends on Zn(2+) as a cofactor.

Its subcellular location is the cytoplasm. It catalyses the reaction L-rhamnulose 1-phosphate = (S)-lactaldehyde + dihydroxyacetone phosphate. It functions in the pathway carbohydrate degradation; L-rhamnose degradation; glycerone phosphate from L-rhamnose: step 3/3. In terms of biological role, catalyzes the reversible cleavage of L-rhamnulose-1-phosphate to dihydroxyacetone phosphate (DHAP) and L-lactaldehyde. The polypeptide is Rhamnulose-1-phosphate aldolase (Shigella sonnei (strain Ss046)).